The primary structure comprises 269 residues: Thymidylate synthase (269 aa).

Residue R21 coordinates dUMP. Position 51 (H51) interacts with (6R)-5,10-methylene-5,6,7,8-tetrahydrofolate. 126–127 (RR) is a dUMP binding site. C146 (nucleophile) is an active-site residue. DUMP-binding positions include 171-174 (RSGD), N182, and 212-214 (HLY). D174 provides a ligand contact to (6R)-5,10-methylene-5,6,7,8-tetrahydrofolate. Residue A268 participates in (6R)-5,10-methylene-5,6,7,8-tetrahydrofolate binding.

This sequence belongs to the thymidylate synthase family. Bacterial-type ThyA subfamily. In terms of assembly, homodimer.

The protein resides in the cytoplasm. The enzyme catalyses dUMP + (6R)-5,10-methylene-5,6,7,8-tetrahydrofolate = 7,8-dihydrofolate + dTMP. The protein operates within pyrimidine metabolism; dTTP biosynthesis. Its function is as follows. Catalyzes the reductive methylation of 2'-deoxyuridine-5'-monophosphate (dUMP) to 2'-deoxythymidine-5'-monophosphate (dTMP) while utilizing 5,10-methylenetetrahydrofolate (mTHF) as the methyl donor and reductant in the reaction, yielding dihydrofolate (DHF) as a by-product. This enzymatic reaction provides an intracellular de novo source of dTMP, an essential precursor for DNA biosynthesis. This Methylocella silvestris (strain DSM 15510 / CIP 108128 / LMG 27833 / NCIMB 13906 / BL2) protein is Thymidylate synthase.